Consider the following 332-residue polypeptide: MVQVAVMGAGSWGTTVAKVFADSGNPVTLWARRDEVADDVNDNHRNSAYLGDVDLPEGLSATTDPAAALHGAEIVVLGVPSQTLRSNLSSWREHIEPNATIISLAKGIEYETGMRMSQVIADVAGVGSDRVAVLTGPNLAKEVAQGQPAATLIACEDDERARFVQSAVAAPYFRPYTSQDVLGAEVAGTSKNVIALAAGIAAGCGFGANTNATVITRGLAETTRLALQLGADARTMAGLAGMGDLVATCTSPLSRNRSFGQRLGEGAGLEAAAEATKGQVAEGVVSCRSVQALARKAGVEMPITDAVVQVCYEDASPKEIINQLLGRTRKPE.

NADPH is bound by residues Ser-11, Trp-12, Arg-32, Arg-33, and Lys-106. Residues Lys-106 and Gly-136 each contribute to the sn-glycerol 3-phosphate site. Ala-140 serves as a coordination point for NADPH. Sn-glycerol 3-phosphate contacts are provided by Lys-191, Asp-244, Ser-254, Arg-255, and Asn-256. Residue Lys-191 is the Proton acceptor of the active site. Arg-255 is an NADPH binding site. Residues Val-280 and Glu-282 each contribute to the NADPH site.

Belongs to the NAD-dependent glycerol-3-phosphate dehydrogenase family.

It is found in the cytoplasm. It catalyses the reaction sn-glycerol 3-phosphate + NAD(+) = dihydroxyacetone phosphate + NADH + H(+). The catalysed reaction is sn-glycerol 3-phosphate + NADP(+) = dihydroxyacetone phosphate + NADPH + H(+). It participates in membrane lipid metabolism; glycerophospholipid metabolism. Catalyzes the reduction of the glycolytic intermediate dihydroxyacetone phosphate (DHAP) to sn-glycerol 3-phosphate (G3P), the key precursor for phospholipid synthesis. This is Glycerol-3-phosphate dehydrogenase [NAD(P)+] from Corynebacterium urealyticum (strain ATCC 43042 / DSM 7109).